The primary structure comprises 2851 residues: Highly reducing polyketide synthase sthA (2851 aa).

One can recognise a Ketosynthase family 3 (KS3) domain in the interval 8-415 (NEPIVIIGSG…GTNAHAIVEG (408 aa)). The interval 304-324 (LDPESPNDRPQYIESHGTGTP) is disordered. The tract at residues 529-851 (IFTGQGAQYA…PYHGSLVRGE (323 aa)) is acyl transferase (AT) domain. The interval 926–1059 (HQLLGNVSPD…GELNILLVDD (134 aa)) is N-terminal hotdog fold. Positions 926-1235 (HQLLGNVSPD…FKPVGSDAKD (310 aa)) constitute a PKS/mFAS DH domain. The tract at residues 949–1242 (PKEMTWLEGH…AKDDRNVFYK (294 aa)) is dehydratase (DH) domain. The active-site Proton acceptor; for dehydratase activity is H958. Residues 1076–1235 (MIPVQPSRLY…FKPVGSDAKD (160 aa)) form a C-terminal hotdog fold region. The Proton donor; for dehydratase activity role is filled by D1137. The interval 1390–1577 (QCTLWVAGVL…GIDTMSPPEL (188 aa)) is methyltransferase (MT) domain. The segment at 2079 to 2252 (TYWLVGLSGA…RSSVVNVGAI (174 aa)) is ketoreductase (KR)domain. Residues 2360-2443 (ADITKVVQQA…DLAAESIPAE (84 aa)) enclose the Carrier domain. S2399 bears the O-(pantetheine 4'-phosphoryl)serine mark. A disordered region spans residues 2447–2496 (HVQQQQQQAGRQDASSNTSSDDETASTLPTSPESASPGTSTPVPEKDISP). Over residues 2455–2488 (AGRQDASSNTSSDDETASTLPTSPESASPGTSTP) the composition is skewed to polar residues. Residues 2535–2767 (LTGCSGLLGH…DLVSVDTCCS (233 aa)) form a reductase (R) domain region.

The cofactor is pantetheine 4'-phosphate.

The enzyme catalyses 7 malonyl-CoA + acetyl-CoA + 10 AH2 + 5 S-adenosyl-L-methionine + 2 H(+) = dehydroprobetaenone I + 10 A + 5 S-adenosyl-L-homocysteine + 7 CO2 + 8 CoA + 6 H2O. The protein operates within mycotoxin biosynthesis. Its function is as follows. Highly reducing polyketide synthase; part of the gene cluster that mediates the biosynthesis of the phytotoxin stemphyloxin II. The first step of the pathway is the synthesis of dehydroprobetaenone I by the polyketide synthase sthA and the enoyl reductase sthE via condensation of one acetyl-CoA starter unit with 7 malonyl-CoA units and 5 methylations. The C-terminal reductase (R) domain of sthA catalyzes the reductive release of the polyketide chain. Because sthA lacks a designated enoylreductase (ER) domain, the required activity is provided the enoyl reductase sthE. The short-chain dehydrogenase/reductase sthC then catalyzes reduction of dehydroprobetaenone I to probetaenone I. The cytochrome P450 monooxygenase sthF catalyzes successive epoxidation, oxidation (resulting from epoxide opening) and hydroxylation to install a tertiary alcohol in the decaline ring to yield betaenone C from dehydroprobetaenone I and betaenone B from probetaenone I. The FAD-linked oxidoreductase sthB is responsible for the conversion of betaenone C to betaenone A via an intramolecular aldol reaction between C-1 and C-17 to form the bridged tricyclic system in betaenone A. Finally, the cytochrome P450 monooxygenase sthD catalyzes the hydroxylation of C-15 to afford the final metabolite stemphyloxin II. The protein is Highly reducing polyketide synthase sthA of Phaeosphaeria nodorum (strain SN15 / ATCC MYA-4574 / FGSC 10173) (Glume blotch fungus).